A 95-amino-acid chain; its full sequence is UPF0473 protein GWCH70_2487 (95 aa).

Belongs to the UPF0473 family.

The chain is UPF0473 protein GWCH70_2487 from Geobacillus sp. (strain WCH70).